Here is a 123-residue protein sequence, read N- to C-terminus: MNYLVAMEAAWLVRDVDDIDDAIGVAVSEAGKRLNEAEMDYVEVEVGATGCPACGEPFDSAFIAADTALVGLVLEMDVFNAESPEHAQRIAKSEIGGALRDVPLKVVEVFETEADEDEAEAEA.

Belongs to the UPF0212 family.

The protein is UPF0212 protein rrnAC0441 of Haloarcula marismortui (strain ATCC 43049 / DSM 3752 / JCM 8966 / VKM B-1809) (Halobacterium marismortui).